A 407-amino-acid polypeptide reads, in one-letter code: Transcriptional regulator alnR (407 aa).

A DNA-binding region (zn(2)-C6 fungal-type) is located at residues 23-53; sequence SCDTCQEAKVKCSQHKPSCHRCLRHRQPCVY. The interval 53–85 is disordered; it reads YSPQRRSGRPPKRPSPSSRLGPESNNSGDDIHN. Positions 75 to 85 are enriched in polar residues; that stretch reads ESNNSGDDIHN.

It is found in the nucleus. Functionally, transcriptional regulator involved in the positive regulation of the expression of the gene cluster that mediates the biosynthesis of asperlin, a polyketide showing anti-inflammatory, antitumor and antibiotic activities. In Emericella nidulans (strain FGSC A4 / ATCC 38163 / CBS 112.46 / NRRL 194 / M139) (Aspergillus nidulans), this protein is Transcriptional regulator alnR.